The chain runs to 202 residues: ATP-dependent Clp protease proteolytic subunit 2 (202 aa).

The active-site Nucleophile is the Ser99. His124 is an active-site residue.

Belongs to the peptidase S14 family. As to quaternary structure, fourteen ClpP subunits assemble into 2 heptameric rings which stack back to back to give a disk-like structure with a central cavity, resembling the structure of eukaryotic proteasomes.

It is found in the cytoplasm. The catalysed reaction is Hydrolysis of proteins to small peptides in the presence of ATP and magnesium. alpha-casein is the usual test substrate. In the absence of ATP, only oligopeptides shorter than five residues are hydrolyzed (such as succinyl-Leu-Tyr-|-NHMec, and Leu-Tyr-Leu-|-Tyr-Trp, in which cleavage of the -Tyr-|-Leu- and -Tyr-|-Trp bonds also occurs).. Cleaves peptides in various proteins in a process that requires ATP hydrolysis. Has a chymotrypsin-like activity. Plays a major role in the degradation of misfolded proteins. The chain is ATP-dependent Clp protease proteolytic subunit 2 from Desulfitobacterium hafniense (strain Y51).